A 396-amino-acid chain; its full sequence is Acetate kinase (396 aa).

A Mg(2+)-binding site is contributed by Asn6. Lys13 contacts ATP. Residue Arg89 coordinates substrate. Asp145 functions as the Proton donor/acceptor in the catalytic mechanism. ATP contacts are provided by residues 205 to 209 (HLGNG), 280 to 282 (DMR), and 329 to 333 (GVGEN). Position 383 (Glu383) interacts with Mg(2+).

Belongs to the acetokinase family. Homodimer. The cofactor is Mg(2+). Mn(2+) serves as cofactor.

Its subcellular location is the cytoplasm. The catalysed reaction is acetate + ATP = acetyl phosphate + ADP. It functions in the pathway metabolic intermediate biosynthesis; acetyl-CoA biosynthesis; acetyl-CoA from acetate: step 1/2. Functionally, catalyzes the formation of acetyl phosphate from acetate and ATP. Can also catalyze the reverse reaction. The polypeptide is Acetate kinase (Mesoplasma florum (strain ATCC 33453 / NBRC 100688 / NCTC 11704 / L1) (Acholeplasma florum)).